Consider the following 302-residue polypeptide: Cuticle collagen 40 (302 aa).

Disordered stretches follow at residues 79–103 and 119–302; these read RIKRDTRSRRGGYAEGGAAAGGGGG and AGAP…APGY. Residues 91–103 are compositionally biased toward gly residues; that stretch reads YAEGGAAAGGGGG. 5 triple-helical region regions span residues 114–143, 162–185, 189–221, 226–252, and 255–290; these read GAAGPAGAPGKDGAPGEDGKAGNPGTAGSD, GPAGPAGGPGPAGPPGPAGADGNT, GGEGPAGPPGPPGPAGNPGTDGAPGNPGAPGQV, GTPGPAGAAGPPGPPGPAGNPGSAGAS, and GPAGPAGDAGPDGAPGNAGAPGAPGEAGAPGSGGGC. The segment covering 137 to 154 has biased composition (low complexity); sequence PGTAGSDAEAAAAPTASD. Positions 194 to 203 are enriched in pro residues; that stretch reads AGPPGPPGPA. Composition is skewed to low complexity over residues 205 to 234 and 245 to 281; these read NPGTDGAPGNPGAPGQVTETPGTPGPAGAA and NPGSAGASEPGPAGPAGDAGPDGAPGNAGAPGAPGEA. Pro residues predominate over residues 293-302; sequence CPPPRTAPGY.

This sequence belongs to the cuticular collagen family. As to quaternary structure, collagen polypeptide chains are complexed within the cuticle by disulfide bonds and other types of covalent cross-links.

Functionally, nematode cuticles are composed largely of collagen-like proteins. The cuticle functions both as an exoskeleton and as a barrier to protect the worm from its environment. The sequence is that of Cuticle collagen 40 (col-40) from Caenorhabditis elegans.